A 204-amino-acid chain; its full sequence is Large ribosomal subunit protein uL4 (204 aa).

Positions 47 to 69 (KAQKNRAAVSGGGKKPWRQKGTG) are disordered.

The protein belongs to the universal ribosomal protein uL4 family. In terms of assembly, part of the 50S ribosomal subunit.

Its function is as follows. One of the primary rRNA binding proteins, this protein initially binds near the 5'-end of the 23S rRNA. It is important during the early stages of 50S assembly. It makes multiple contacts with different domains of the 23S rRNA in the assembled 50S subunit and ribosome. Forms part of the polypeptide exit tunnel. This is Large ribosomal subunit protein uL4 from Teredinibacter turnerae (strain ATCC 39867 / T7901).